Consider the following 204-residue polypeptide: Cytochrome c biogenesis ATP-binding export protein CcmA (204 aa).

The ABC transporter domain maps to 3-204 (LTVTDLAIAR…PLDDPDGDFL (202 aa)). 35–42 (GPNGAGKT) contacts ATP.

Belongs to the ABC transporter superfamily. CcmA exporter (TC 3.A.1.107) family. The complex is composed of two ATP-binding proteins (CcmA) and two transmembrane proteins (CcmB).

It localises to the cell membrane. The catalysed reaction is heme b(in) + ATP + H2O = heme b(out) + ADP + phosphate + H(+). In terms of biological role, part of the ABC transporter complex CcmAB involved in the biogenesis of c-type cytochromes; once thought to export heme, this seems not to be the case, but its exact role is uncertain. Responsible for energy coupling to the transport system. The sequence is that of Cytochrome c biogenesis ATP-binding export protein CcmA from Ruegeria pomeroyi (strain ATCC 700808 / DSM 15171 / DSS-3) (Silicibacter pomeroyi).